The following is an 848-amino-acid chain: DIS3-like exonuclease 2 (848 aa).

Positions 153-173 (KGDRNSGKTDNNSPNKTEKRC) are disordered. Mg(2+) contacts are provided by Asp-345 and Asp-354.

This sequence belongs to the RNR ribonuclease family. DIS3L2 subfamily. Mg(2+) serves as cofactor. Mn(2+) is required as a cofactor. Cleaved by caspase ced-3 in vitro.

Its subcellular location is the cytoplasm. The protein resides in the P-body. Its function is as follows. 3'-5'-exoribonuclease that specifically recognizes RNAs polyuridylated at their 3' end and mediates their degradation. Component of an exosome-independent RNA degradation pathway that mediates degradation of cytoplasmic mRNAs that have been deadenylated and subsequently uridylated at their 3'. This is DIS3-like exonuclease 2 from Caenorhabditis elegans.